The chain runs to 932 residues: RNA-binding protein 12 (932 aa).

The segment at 97-116 (IPPANASRSGPPPSSGMSGR) is disordered. The span at 98–116 (PPANASRSGPPPSSGMSGR) shows a compositional bias: low complexity. In terms of domain architecture, RRM 1 spans 304-379 (LYVSVHGMPF…RYVEVSPATE (76 aa)). A phosphoserine mark is found at Ser-352 and Ser-375. The tract at residues 393-424 (QNMGPSGQSHPPPQTLPRSKSPSGQKRSRSRS) is disordered. Residues 408–417 (LPRSKSPSGQ) are compositionally biased toward polar residues. 3 positions are modified to phosphoserine: Ser-420, Ser-422, and Ser-424. Residues 430–507 (FCVYLKGLPF…RFIQVHPITK (78 aa)) enclose the RRM 2 domain. At Ser-525 the chain carries Phosphoserine. Over residues 717-734 (NGPPFNFPGNFGGSNAFG) the composition is skewed to low complexity. Residues 717-853 (NGPPFNFPGN…PGFASSSGKP (137 aa)) are disordered. The span at 783–811 (SGFGGGPQNFGNGPGSLGGPPGFGSGPPG) shows a compositional bias: gly residues. Residues 824 to 836 (AFGPGPGPGPGPG) show a composition bias toward pro residues. Residues 856–932 (TVIKVQNMPF…GSRKVKLVLG (77 aa)) form the RRM 3 domain.

The protein resides in the nucleus. The protein is RNA-binding protein 12 (RBM12) of Macaca mulatta (Rhesus macaque).